Here is a 415-residue protein sequence, read N- to C-terminus: Adenylosuccinate synthetase (415 aa).

Residues 11-17 (GDEGKGK) and 39-41 (GHT) each bind GTP. Asp-12 (proton acceptor) is an active-site residue. Mg(2+) contacts are provided by Asp-12 and Gly-39. Residues 12–15 (DEGK), 37–40 (NAGH), Thr-124, Arg-138, Gln-218, Thr-233, and Arg-297 each bind IMP. Catalysis depends on His-40, which acts as the Proton donor. 293 to 299 (TTTGRAR) contacts substrate. GTP is bound by residues Arg-299, 325 to 327 (KLD), and 403 to 405 (STS).

It belongs to the adenylosuccinate synthetase family. As to quaternary structure, homodimer. Requires Mg(2+) as cofactor.

The protein resides in the cytoplasm. It carries out the reaction IMP + L-aspartate + GTP = N(6)-(1,2-dicarboxyethyl)-AMP + GDP + phosphate + 2 H(+). Its pathway is purine metabolism; AMP biosynthesis via de novo pathway; AMP from IMP: step 1/2. Functionally, plays an important role in the de novo pathway of purine nucleotide biosynthesis. Catalyzes the first committed step in the biosynthesis of AMP from IMP. This chain is Adenylosuccinate synthetase, found in Helicobacter hepaticus (strain ATCC 51449 / 3B1).